A 57-amino-acid chain; its full sequence is Gene 19.3 protein (57 aa).

This Escherichia coli (Bacteriophage T3) protein is Gene 19.3 protein (19.3).